The following is a 299-amino-acid chain: Trimeric intracellular cation channel type A (299 aa).

Topologically, residues 1–18 are lumenal; that stretch reads MELLSALSLGELALSFSR. The helical transmembrane segment at 19-39 threads the bilayer; it reads VPLFPVFDLSYFIVSILYLKY. Over 40–51 the chain is Cytoplasmic; sequence EPGAVELSRRHP. A helical transmembrane segment spans residues 52-72; it reads IASWLCAMLHCFGSYILADLL. The Lumenal segment spans residues 73–85; sequence LGEPLIDYFSNNS. Residue glycine 74 coordinates Ca(2+). The chain crosses the membrane as a helical span at residues 86–106; the sequence is SILLASAVWYLIFFCPLDLFY. Over 107-144 the chain is Cytoplasmic; that stretch reads KCVCFLPVKLIFVAMKEVVRVRKIAVGIHHAHHHYHHG. Positions 122 and 126 each coordinate a 1,2-diacyl-sn-glycero-3-phospho-(1D-myo-inositol-4,5-bisphosphate). A helical transmembrane segment spans residues 145-165; that stretch reads WFVMIATGWVKGSGVALMSNF. The Lumenal portion of the chain corresponds to 166 to 178; the sequence is EQLLRGVWKPETN. The chain crosses the membrane as a helical span at residues 179-199; that stretch reads EILHMSFPTKASLYGAILFTL. The Cytoplasmic segment spans residues 200–209; the sequence is QQTRWLPVSK. Residues 210-230 traverse the membrane as a helical segment; it reads ASLIFIFTLFMVSCKVFLTAT. Topologically, residues 231-234 are lumenal; the sequence is HSHS. The helical transmembrane segment at 235 to 255 threads the bilayer; it reads SPFDALEGYICPVLFGSACGG. Over 256–299 the chain is Cytoplasmic; the sequence is DHHHDNHGGSHSGGGPGAQHSAMPAKSKEELSEGSRKKKAKKAD. The disordered stretch occupies residues 260-299; that stretch reads DNHGGSHSGGGPGAQHSAMPAKSKEELSEGSRKKKAKKAD. Basic and acidic residues predominate over residues 281-290; the sequence is KSKEELSEGS.

The protein belongs to the TMEM38 family. As to quaternary structure, homotrimer; conformation seems to be controled by binding to diacylglycerol (DAG).

It localises to the sarcoplasmic reticulum membrane. The protein resides in the nucleus membrane. It catalyses the reaction K(+)(in) = K(+)(out). Its activity is regulated as follows. Channel activity is activated by a change of voltage within the sarcoplasmic reticulum lumen and blocked by luminal high Ca(2+) levels. Functionally, intracellular monovalent cation channel required for maintenance of rapid intracellular calcium release. Acts as a potassium counter-ion channel that functions in synchronization with calcium release from intracellular stores. Opened by a change of voltage within the sarcoplasmic reticulum lumen. This is Trimeric intracellular cation channel type A from Homo sapiens (Human).